We begin with the raw amino-acid sequence, 313 residues long: Putative phosphoribosylaminoimidazole-succinocarboxamide synthase 2 (313 aa).

It belongs to the SAICAR synthetase family.

The catalysed reaction is 5-amino-1-(5-phospho-D-ribosyl)imidazole-4-carboxylate + L-aspartate + ATP = (2S)-2-[5-amino-1-(5-phospho-beta-D-ribosyl)imidazole-4-carboxamido]succinate + ADP + phosphate + 2 H(+). The protein operates within purine metabolism; IMP biosynthesis via de novo pathway; 5-amino-1-(5-phospho-D-ribosyl)imidazole-4-carboxamide from 5-amino-1-(5-phospho-D-ribosyl)imidazole-4-carboxylate: step 1/2. The polypeptide is Putative phosphoribosylaminoimidazole-succinocarboxamide synthase 2 (purC2) (Mesorhizobium japonicum (strain LMG 29417 / CECT 9101 / MAFF 303099) (Mesorhizobium loti (strain MAFF 303099))).